The following is a 65-amino-acid chain: Large ribosomal subunit protein bL35 (65 aa).

This sequence belongs to the bacterial ribosomal protein bL35 family.

This Paraburkholderia phytofirmans (strain DSM 17436 / LMG 22146 / PsJN) (Burkholderia phytofirmans) protein is Large ribosomal subunit protein bL35.